We begin with the raw amino-acid sequence, 102 residues long: Small ribosomal subunit protein uS10 (102 aa).

This sequence belongs to the universal ribosomal protein uS10 family. Part of the 30S ribosomal subunit.

Involved in the binding of tRNA to the ribosomes. This chain is Small ribosomal subunit protein uS10, found in Clostridium perfringens (strain ATCC 13124 / DSM 756 / JCM 1290 / NCIMB 6125 / NCTC 8237 / Type A).